A 306-amino-acid chain; its full sequence is Curved DNA-binding protein (306 aa).

One can recognise a J domain in the interval 5–69; sequence DYYAIMGVKP…QRRAEYDQMW (65 aa).

It localises to the cytoplasm. The protein localises to the nucleoid. Functionally, DNA-binding protein that preferentially recognizes a curved DNA sequence. It is probably a functional analog of DnaJ; displays overlapping activities with DnaJ, but functions under different conditions, probably acting as a molecular chaperone in an adaptive response to environmental stresses other than heat shock. Lacks autonomous chaperone activity; binds native substrates and targets them for recognition by DnaK. Its activity is inhibited by the binding of CbpM. In Escherichia coli O17:K52:H18 (strain UMN026 / ExPEC), this protein is Curved DNA-binding protein.